The sequence spans 329 residues: Probable endo-beta-1,4-glucanase B (329 aa).

The N-terminal stretch at 1-18 is a signal peptide; that stretch reads MKFGSIVLIAAAAGSAVA. 2 N-linked (GlcNAc...) asparagine glycosylation sites follow: Asn-33 and Asn-96. Glu-156 (proton donor) is an active-site residue. The Nucleophile role is filled by Glu-263.

The protein belongs to the glycosyl hydrolase 5 (cellulase A) family.

The protein resides in the secreted. The enzyme catalyses Endohydrolysis of (1-&gt;4)-beta-D-glucosidic linkages in cellulose, lichenin and cereal beta-D-glucans.. Has endoglucanase activity on substrates containing beta-1,4 glycosidic bonds, like in carboxymethylcellulose (CMC), hydroxyethylcellulose (HEC) and beta-glucan. Involved in the degradation of complex natural cellulosic substrates. The polypeptide is Probable endo-beta-1,4-glucanase B (eglB) (Neosartorya fischeri (strain ATCC 1020 / DSM 3700 / CBS 544.65 / FGSC A1164 / JCM 1740 / NRRL 181 / WB 181) (Aspergillus fischerianus)).